Reading from the N-terminus, the 226-residue chain is dTTP/UTP pyrophosphatase (226 aa).

Asp-85 (proton acceptor) is an active-site residue.

It belongs to the Maf family. YhdE subfamily. A divalent metal cation serves as cofactor.

It is found in the cytoplasm. It catalyses the reaction dTTP + H2O = dTMP + diphosphate + H(+). The catalysed reaction is UTP + H2O = UMP + diphosphate + H(+). Functionally, nucleoside triphosphate pyrophosphatase that hydrolyzes dTTP and UTP. May have a dual role in cell division arrest and in preventing the incorporation of modified nucleotides into cellular nucleic acids. The sequence is that of dTTP/UTP pyrophosphatase from Psychrobacter cryohalolentis (strain ATCC BAA-1226 / DSM 17306 / VKM B-2378 / K5).